The sequence spans 683 residues: Solute carrier family 28 member 3 (683 aa).

The tract at residues 1-71 is disordered; the sequence is MSAFKARGVE…EEEEEGEEDQ (71 aa). Residues 1 to 97 are Cytoplasmic-facing; sequence MSAFKARGVE…FYKRNKKIIH (97 aa). A compositionally biased stretch (acidic residues) spans 60–71; the sequence is DNEEEEEGEEDQ. Residues 98-118 traverse the membrane as a helical segment; that stretch reads YTFLGLLLVGYFALVIAACIV. Over 119-123 the chain is Extracellular; it reads NFKQS. A helical membrane pass occupies residues 124–144; it reads LALLVLTLIAIFFFFWDLFIA. The Cytoplasmic portion of the chain corresponds to 145 to 168; it reads KYGDKIAEALKPCQKFLDNHWSII. A helical membrane pass occupies residues 169–189; the sequence is RWFVYGALLLAVILWLTLDTA. At 190-192 the chain is on the extracellular side; that stretch reads KRG. A helical membrane pass occupies residues 193-214; the sequence is ANQVIPFFGLILYILLVFIFSK. The Cytoplasmic portion of the chain corresponds to 215–222; the sequence is HPTKVRWR. Residues 223 to 242 form a helical membrane-spanning segment; sequence IVIWGLLLQFIFGLIILRTK. Over 243–279 the chain is Extracellular; sequence PGLDAFNWLGIQVQTFLKYTDAGSRFLFGDDFQDHFF. Residues 280-300 traverse the membrane as a helical segment; sequence AFAVLPIVIFFSTVMSMMYYL. Residues 301–324 are Cytoplasmic-facing; it reads GLMQWLILKVGWLMQITMGTSPME. An intramembrane region (helical) is located at residues 325–343; the sequence is SMVSAGNIFVGQTESPLLI. Residues 344 to 356 lie on the Cytoplasmic side of the membrane; it reads RPYLADLTISEMH. A helical transmembrane segment spans residues 357–379; the sequence is SVMSSGFATIAGSVLGAYISLGI. Over 380–381 the chain is Extracellular; it reads PA. Residues 382–403 form a helical membrane-spanning segment; that stretch reads AHLLTASVMSAPAALAISKTFW. Topologically, residues 404-438 are cytoplasmic; it reads PETKKSKNSTQTSIKLEKGQENNLVEAASQGASAA. A helical membrane pass occupies residues 439–464; that stretch reads VPLVANIAANLIAFLAVLAFINATLS. Residues 465–502 are Extracellular-facing; it reads WLGSMFNYPQFSFEIICSYVLMPFAFMMGVNYDDSFLV. The helical intramembrane region spans 503 to 522; sequence AELLGMKTFFNEFVAYQRLS. The Extracellular portion of the chain corresponds to 523–561; the sequence is EYIHNRESGGPLFVDGVRQYMSVRSEAIATYALCGFANF. Residues 562 to 572 form a helical membrane-spanning segment; the sequence is GSLGIMIGGLS. At 573 to 585 the chain is on the cytoplasmic side; sequence SLAPHRKSDIASC. Residues 586-608 form a helical membrane-spanning segment; sequence GIRALIAGTIACFSTACIAGVLY. The Extracellular segment spans residues 609–683; it reads IPELYCPNLL…GFNCSEVRPE (75 aa).

Belongs to the concentrative nucleoside transporter (CNT) (TC 2.A.41) family. As to quaternary structure, homotrimer.

The protein localises to the cell membrane. It carries out the reaction thymidine(out) + 2 Na(+)(out) = thymidine(in) + 2 Na(+)(in). The catalysed reaction is cytidine(out) + 2 Na(+)(out) = cytidine(in) + 2 Na(+)(in). The enzyme catalyses uridine(out) + 2 Na(+)(out) = uridine(in) + 2 Na(+)(in). It catalyses the reaction adenosine(out) + 2 Na(+)(out) = adenosine(in) + 2 Na(+)(in). It carries out the reaction guanosine(out) + 2 Na(+)(out) = guanosine(in) + 2 Na(+)(in). The catalysed reaction is inosine(out) + 2 Na(+)(out) = inosine(in) + 2 Na(+)(in). Sodium-dependent, pyrimidine- and purine-selective. Involved in the homeostasis of endogenous nucleosides. Exhibits the transport characteristics of the nucleoside transport system cib or N3 subtype (N3/cib) (with marked transport of both thymidine and inosine). Employs a 2:1 sodium/nucleoside ratio. Also able to transport gemcitabine, 3'-azido-3'-deoxythymidine (AZT), ribavirin and 3-deazauridine. This is Solute carrier family 28 member 3 (SLC28A3) from Eptatretus stoutii (Pacific hagfish).